Here is a 202-residue protein sequence, read N- to C-terminus: Transcriptional regulator SdrP (202 aa).

The HTH crp-type domain maps to 117 to 189; sequence QRLKNRMAAA…YGKIQLLDLK (73 aa). A DNA-binding region (H-T-H motif) is located at residues 149–168; sequence HDELAAAVGSVRETVTKVIG.

As to quaternary structure, homodimer.

Functionally, activates transcription. The consensus DNA-binding site of this transcriptional regulator is 5'-WWGTGAN(5-7)ACACWW-3' in which W is A or T and N is G, A, T or C. Regulated genes include those encoding proteins involved in nutrient and energy supply, redox control and polyadenylation of mRNA. Also regulates genes involved in oxidative stress response such as genes encoding manganese superoxide dismutase and catalase, and genes encoding a protein involved in nucleotide excision repair of damaged DNA and putative proteins involved in redox control, protein degradation and transcriptional regulation. This chain is Transcriptional regulator SdrP, found in Thermus thermophilus (strain ATCC 27634 / DSM 579 / HB8).